Consider the following 589-residue polypeptide: Mitoguardin 2 (589 aa).

2 helical membrane-spanning segments follow: residues 11 to 31 and 42 to 62; these read IIQALAMTVAEIPVFLYTTFG and PGLRKVLFATALGTVALALAA. A disordered region spans residues 87–134; the sequence is VPGSVLPVRRSSSAKKGYSRSRVQSPSSKSNDTLSGISSLDPSKHSSS. 2 stretches are compositionally biased toward low complexity: residues 106 to 116 and 123 to 134; these read RSRVQSPSSKS and ISSLDPSKHSSS.

Belongs to the mitoguardin family. As to quaternary structure, homodimer and heterodimer; forms heterodimers with miga1.

The protein localises to the mitochondrion outer membrane. In terms of biological role, regulator of mitochondrial fusion: acts by forming homo- and heterodimers at the mitochondrial outer membrane and facilitating the formation of pld6/MitoPLD dimers. May act by regulating phospholipid metabolism via pld6/MitoPLD. This Xenopus laevis (African clawed frog) protein is Mitoguardin 2.